The primary structure comprises 317 residues: Putative peptide import ATP-binding protein BruAb2_0797 (317 aa).

The ABC transporter domain occupies 7–250 (LSVRGLAKHY…PQHPYTRALL (244 aa)). Position 43–50 (43–50 (GESGSGKT)) interacts with ATP.

It belongs to the ABC transporter superfamily. In terms of assembly, the complex is composed of two ATP-binding proteins (BruAb2_0796 and BruAb2_0797), two transmembrane proteins (BruAb2_0794) and a solute-binding protein (BruAb2_0792).

It is found in the cell inner membrane. In terms of biological role, probably part of an ABC transporter complex that could be involved in peptide import. Probably responsible for energy coupling to the transport system. The polypeptide is Putative peptide import ATP-binding protein BruAb2_0797 (Brucella abortus biovar 1 (strain 9-941)).